The primary structure comprises 256 residues: Flap endonuclease Xni (256 aa).

Aspartate 105 lines the Mg(2+) pocket. Residues 164-250 form the 5'-3' exonuclease domain; it reads SQFIDFLAMA…LNTRLANFRV (87 aa). Residues methionine 172, alanine 173, proline 181, isoleucine 183, and isoleucine 186 each contribute to the K(+) site. The tract at residues 185–190 is interaction with DNA; it reads GIGPKS.

This sequence belongs to the Xni family. The cofactor is Mg(2+). K(+) serves as cofactor.

Its function is as follows. Has flap endonuclease activity. During DNA replication, flap endonucleases cleave the 5'-overhanging flap structure that is generated by displacement synthesis when DNA polymerase encounters the 5'-end of a downstream Okazaki fragment. This is Flap endonuclease Xni from Shewanella loihica (strain ATCC BAA-1088 / PV-4).